Consider the following 113-residue polypeptide: T cell receptor alpha variable 8-3 (113 aa).

An N-terminal signal peptide occupies residues 1 to 20; that stretch reads MLLELIPLLGIHFVLRTARA. In terms of domain architecture, Ig-like spans 21–113; that stretch reads QSVTQPDIHI…DAAEYFCAVG (93 aa). A disulfide bridge links Cys-42 with Cys-110. Asn-43 is a glycosylation site (N-linked (GlcNAc...) asparagine).

Alpha-beta TR is a heterodimer composed of an alpha and beta chain; disulfide-linked. The alpha-beta TR is associated with the transmembrane signaling CD3 coreceptor proteins to form the TR-CD3 (TcR or TCR). The assembly of alpha-beta TR heterodimers with CD3 occurs in the endoplasmic reticulum where a single alpha-beta TR heterodimer associates with one CD3D-CD3E heterodimer, one CD3G-CD3E heterodimer and one CD247 homodimer forming a stable octameric structure. CD3D-CD3E and CD3G-CD3E heterodimers preferentially associate with TR alpha and TR beta chains, respectively. The association of the CD247 homodimer is the last step of TcR assembly in the endoplasmic reticulum and is required for transport to the cell surface.

It is found in the cell membrane. Its function is as follows. V region of the variable domain of T cell receptor (TR) alpha chain that participates in the antigen recognition. Alpha-beta T cell receptors are antigen specific receptors which are essential to the immune response and are present on the cell surface of T lymphocytes. Recognize peptide-major histocompatibility (MH) (pMH) complexes that are displayed by antigen presenting cells (APC), a prerequisite for efficient T cell adaptive immunity against pathogens. Binding of alpha-beta TR to pMH complex initiates TR-CD3 clustering on the cell surface and intracellular activation of LCK that phosphorylates the ITAM motifs of CD3G, CD3D, CD3E and CD247 enabling the recruitment of ZAP70. In turn ZAP70 phosphorylates LAT, which recruits numerous signaling molecules to form the LAT signalosome. The LAT signalosome propagates signal branching to three major signaling pathways, the calcium, the mitogen-activated protein kinase (MAPK) kinase and the nuclear factor NF-kappa-B (NF-kB) pathways, leading to the mobilization of transcription factors that are critical for gene expression and essential for T cell growth and differentiation. The T cell repertoire is generated in the thymus, by V-(D)-J rearrangement. This repertoire is then shaped by intrathymic selection events to generate a peripheral T cell pool of self-MH restricted, non-autoaggressive T cells. Post-thymic interaction of alpha-beta TR with the pMH complexes shapes TR structural and functional avidity. The sequence is that of T cell receptor alpha variable 8-3 from Homo sapiens (Human).